A 101-amino-acid chain; its full sequence is CRISPR-associated endoribonuclease Cas2 (101 aa).

D8 is a Mg(2+) binding site.

The protein belongs to the CRISPR-associated endoribonuclease Cas2 protein family. Homodimer, forms a heterotetramer with a Cas1 homodimer. Requires Mg(2+) as cofactor.

Functionally, CRISPR (clustered regularly interspaced short palindromic repeat), is an adaptive immune system that provides protection against mobile genetic elements (viruses, transposable elements and conjugative plasmids). CRISPR clusters contain sequences complementary to antecedent mobile elements and target invading nucleic acids. CRISPR clusters are transcribed and processed into CRISPR RNA (crRNA). Functions as a ssRNA-specific endoribonuclease. Involved in the integration of spacer DNA into the CRISPR cassette. The sequence is that of CRISPR-associated endoribonuclease Cas2 from Treponema denticola (strain ATCC 35405 / DSM 14222 / CIP 103919 / JCM 8153 / KCTC 15104).